Reading from the N-terminus, the 602-residue chain is ATP-dependent lipid A-core flippase (602 aa).

5 helical membrane-spanning segments follow: residues 28-48 (VGIF…QPML), 84-104 (LLII…NYFL), 158-178 (IKVV…LLWM), 180-200 (WHLT…VSIA), and 268-288 (PMLQ…VLFL). Residues 32–323 (LLSIVGFVIF…LSEVSSTIQK (292 aa)) enclose the ABC transmembrane type-1 domain. Positions 355-591 (LEVRNLSFTY…NGHYARLHAM (237 aa)) constitute an ABC transporter domain. Residue 389–396 (GRSGSGKS) coordinates ATP.

This sequence belongs to the ABC transporter superfamily. Lipid exporter (TC 3.A.1.106) family. Homodimer.

The protein localises to the cell inner membrane. It carries out the reaction ATP + H2O + lipid A-core oligosaccharideSide 1 = ADP + phosphate + lipid A-core oligosaccharideSide 2.. Its function is as follows. Involved in lipopolysaccharide (LPS) biosynthesis. Translocates lipid A-core from the inner to the outer leaflet of the inner membrane. Transmembrane domains (TMD) form a pore in the inner membrane and the ATP-binding domain (NBD) is responsible for energy generation. This is ATP-dependent lipid A-core flippase from Pseudomonas putida (strain ATCC 47054 / DSM 6125 / CFBP 8728 / NCIMB 11950 / KT2440).